A 79-amino-acid chain; its full sequence is Sulfur carrier protein TusA (79 aa).

The Cysteine persulfide intermediate role is filled by Cys-17.

The protein belongs to the sulfur carrier protein TusA family.

It localises to the cytoplasm. In terms of biological role, sulfur carrier protein which probably makes part of a sulfur-relay system. The sequence is that of Sulfur carrier protein TusA from Actinobacillus pleuropneumoniae serotype 7 (strain AP76).